We begin with the raw amino-acid sequence, 278 residues long: MLEILMSLTAAICWAFNGIAYRKGVKDVSAFTANFHRTLFATVYFLPLALRDFPGVVIDLQTALVLVISAMLSFYIGDLSYFASLKRSPVSIALPASSTYPVYVVLLSTVIYGAELSLNALISAILVFVAVYIIYGSGEKGETSGLFYALLAAFSWALAILTLDFLTDRLPVSIVAFVRLLLCLILLSFTAKKDELSTEIRLFFRSVRGIFLLLGIMLFITAIKVSSSWNVVQPSSTSPVFAAIFGAIFLKERISFRLVAGIFVIILAILLLLLPPLQ.

10 helical membrane-spanning segments follow: residues 1 to 21, 30 to 50, 56 to 76, 92 to 112, 116 to 136, 146 to 166, 170 to 190, 209 to 229, 230 to 250, and 258 to 278; these read MLEI…GIAY, AFTA…PLAL, VVID…SFYI, IALP…TVIY, LSLN…IIYG, LFYA…LDFL, LPVS…LSFT, GIFL…SSSW, NVVQ…AIFL, and LVAG…PPLQ. EamA domains follow at residues 12–136 and 154–274; these read ICWA…IIYG and FSWA…LLLL.

The protein belongs to the EamA transporter family.

It localises to the cell membrane. This is an uncharacterized protein from Archaeoglobus fulgidus (strain ATCC 49558 / DSM 4304 / JCM 9628 / NBRC 100126 / VC-16).